An 879-amino-acid chain; its full sequence is DNA methyltransferase A (879 aa).

This sequence belongs to the methyltransferase superfamily.

The enzyme catalyses a 2'-deoxyadenosine in DNA + S-adenosyl-L-methionine = an N(6)-methyl-2'-deoxyadenosine in DNA + S-adenosyl-L-homocysteine + H(+). Its function is as follows. Recognizes the double-stranded sequence 5'-GACGAG-3' and methylates A-5, yielding m6A. m6A methylation functions as a transcriptional modifier, promoting transcription of a number of genes (at least scpA, hbs, rnhC, yumC and zapA). One studied mechanism is via transcriptional repressor ScoC (also called hpr) which binds to non-methylated scpA promoter; when the m6A target is methylated ScoC no longer binds and scpA transcription is up-regulated. Other mechanisms for gene expression regulation probably exist. Binds DNA with and without the target sequence. Although it resembles a restriction-modification system, it does not have detectable endonuclease activity under tested conditions. A gamma subtype methylase. This chain is DNA methyltransferase A, found in Bacillus subtilis (strain 168).